Reading from the N-terminus, the 427-residue chain is Trigger factor (427 aa).

One can recognise a PPIase FKBP-type domain in the interval 163-248 (GDTVVIDFVG…IHEVKAKEVP (86 aa)).

The protein belongs to the FKBP-type PPIase family. Tig subfamily.

It localises to the cytoplasm. The catalysed reaction is [protein]-peptidylproline (omega=180) = [protein]-peptidylproline (omega=0). In terms of biological role, involved in protein export. Acts as a chaperone by maintaining the newly synthesized protein in an open conformation. Functions as a peptidyl-prolyl cis-trans isomerase. The polypeptide is Trigger factor (Streptococcus pneumoniae (strain Hungary19A-6)).